The following is a 605-amino-acid chain: MRIDQSIINEIKDKTDILDLVSEYVKLEKRGRNYIGLCPFHDEKTPSFTVSEDKQICHCFGCKKGGNVFQFTQEIKDISFVEAVKELGDRVNVAVDIEATQFNSNIQIASDDLQMIEMHELIQEFYYYALTKTVEGEQALTYLQERGFTDALIKERGIGFAPDSSHFCHDFLQKRGYDIELAYEAGLLSRNEENFSYYDRFRNRIMFPLKNAQGRIVGYSGRTYTGQEPKYLNSPETPIFQKRKLLYNLDKARKSIRKLDEIVLLEGFMDVIKSDTAGLKNVVATMGTQLSDEHITFIRKLTLNITLMFDGDFAGSEATLKTGQHLLQQGLNVFVIQLPSGMDPDEYIGKYGNDAFTAFVKNDKKSFAHYKVSILKDEIAHNDLSYERYLKELSHDISLMKSSILQQKALNDVAPFFNVSPEQLANEIQFNQAPANYYPDDEYGGYDEYGGYIEPEPIGMAQFDNLSRQEKAERAFLKHLMRDKDTFLNYYESVDKDNFTNQHFKYVFEVLHDFYAENDQYNISDAVQYVNSNELRETLISLEQYNLNDEPYENEIDDYVNVINEKGQETIESLNHKLREATRIGDVELQKYYLQQIVAKNKERM.

The CHC2-type zinc-finger motif lies at 38-62 (CPFHDEKTPSFTVSEDKQICHCFGC). Positions 260-341 (DEIVLLEGFM…NVFVIQLPSG (82 aa)) constitute a Toprim domain. Glu266, Asp310, and Asp312 together coordinate Mg(2+).

The protein belongs to the DnaG primase family. In terms of assembly, monomer. Interacts with DnaB. Zn(2+) is required as a cofactor. The cofactor is Mg(2+).

The enzyme catalyses ssDNA + n NTP = ssDNA/pppN(pN)n-1 hybrid + (n-1) diphosphate.. Functionally, RNA polymerase that catalyzes the synthesis of short RNA molecules used as primers for DNA polymerase during DNA replication. The chain is DNA primase from Staphylococcus aureus (strain MSSA476).